Consider the following 454-residue polypeptide: Innexin-19 (454 aa).

At 1–48 the chain is on the cytoplasmic side; sequence MWRTPASTGPLRQDRQMFFHATLARSFINALSVRGDDDAVDRLNYYYT. A helical membrane pass occupies residues 49–69; the sequence is PLILAVCCLVISAKQYGGTPI. Over 70-118 the chain is Extracellular; that stretch reads ECWVNPHSRESMEEYIESYCWIQNTYWIPMYENVPDDHTAREEKQIGYY. Residues 119–139 form a helical membrane-spanning segment; it reads QWVPFILIAEALMFSLPCIFW. The Cytoplasmic portion of the chain corresponds to 140–214; the sequence is RLCSFQSGLN…SRFLSGQCLS (75 aa). A helical membrane pass occupies residues 215 to 235; the sequence is ILHSFTKLLYSMNVVAQFLIL. Topologically, residues 236–300 are extracellular; sequence NACLKSSDFL…ALLINIINEK (65 aa). A helical membrane pass occupies residues 301–321; that stretch reads VFAFLWCWYMILAIITTCSFI. Topologically, residues 322 to 454 are cytoplasmic; it reads YWIANSFIHS…SNPGQTKSFL (133 aa).

Belongs to the pannexin family. As to expression, specifically expressed in sensory neurons and interneurons in the head and tail. Expressed in neurons AWC, ASH, AFD, ASI, ADL, ASK, BAG, AWB, and ADF (head sensory neurons); ADA, AIZ, RIC, AIY, and AIM (head interneurons); PHA and PHB (tail sensory neurons); and PVC and PVQ (tail interneurons).

It is found in the cell membrane. It localises to the cell junction. Its subcellular location is the gap junction. Its function is as follows. Structural component of the gap junctions that specifically coordinates left-right asymmetry in the developing nervous system. Acts by forming gap junction network linking embryonic neurons and providing electrical coupling between cells, leading to promote or inhibit AWC signaling. Required for the left and right AWC olfactory neurons to establish asymmetric patterns of gene expression during embryogenesis. Acts autonomously. The polypeptide is Innexin-19 (inx-19) (Caenorhabditis elegans).